The chain runs to 252 residues: Intraflagellar transport associated protein 2 (252 aa).

Residues 35–42 (GPPKAGKT) and 118–125 (WDVSGDKK) contribute to the GTP site.

This sequence belongs to the small GTPase superfamily. Rab family. Component of the IFT complex B composed of at least che-2, che-13, dyf-1, dyf-3, dyf-6, dyf-11, dyf-13, ift-20, ift-74, ift-81, ifta-2, osm-1, osm-5 and osm-6. Ciliated sensory neurons.

It is found in the cytoplasm. Its subcellular location is the cytoskeleton. The protein localises to the cilium axoneme. Functionally, component of the intraflagellar transport (IFT) complex B required for transport of proteins in the motile cilium. May be required for ciliary entrance and transport of specific ciliary cargo proteins such as che-3 which are related to motility. Regulates specific signaling activities in the cilia, such as the daf-2/insulin receptor-like transduction pathway. The sequence is that of Intraflagellar transport associated protein 2 from Caenorhabditis elegans.